The sequence spans 348 residues: D-erythrose-4-phosphate dehydrogenase (348 aa).

Residues 12 to 13 (RI) and Arg81 each bind NAD(+). Substrate is bound by residues 154–156 (SCT), Arg200, 213–214 (TK), and Arg236. Cys155 acts as the Nucleophile in catalysis. NAD(+) is bound at residue Asn318.

Belongs to the glyceraldehyde-3-phosphate dehydrogenase family. Epd subfamily. In terms of assembly, homotetramer.

It localises to the cytoplasm. It carries out the reaction D-erythrose 4-phosphate + NAD(+) + H2O = 4-phospho-D-erythronate + NADH + 2 H(+). Its pathway is cofactor biosynthesis; pyridoxine 5'-phosphate biosynthesis; pyridoxine 5'-phosphate from D-erythrose 4-phosphate: step 1/5. In terms of biological role, catalyzes the NAD-dependent conversion of D-erythrose 4-phosphate to 4-phosphoerythronate. In Salmonella gallinarum (strain 287/91 / NCTC 13346), this protein is D-erythrose-4-phosphate dehydrogenase.